The chain runs to 852 residues: MQNLDVREAYLNFFKSKGHEITPSAPLVPNDATLLFTNAGMVPFKSIFTGEVPRPTPPIRTSCQTCIRAGGKHNDLDNVGYTARHHTFFEMLGNFSFGEYFKKDAIAYAWEFVTQVLKLPVDRLYVTVHESDDEAFELWARHIARDRIYRFGDHDNFWQMGDTGPCGPCSEIFYDQGGEHFNTPEDYMGGDGDRFLEIWNLVFMQYERSADGKLSPLPKPSIDTGMGLERVTAIMEGKFSNYDSSLFMPLIDEVAKLCGKPYSYDSGASYRVISDHIRSVTFLLAQGTTFDKEGRGYVLRRILRRAIRHGYLLGIKEPFMYKLVDKVCEMMGGHYTYLNEKKAAVKEQVRLEEERFLATIASGLELFNEELAKTKEIFSGETAFKLYDTYGFPLDLTADMLREKGLKVDEAKFDELMSEQKARAKAAWKGSGDKSSKGDFKQLLEEFGENKFSGYDELERQSKILALLDNDFKRVQNLRAGESGWVMFDVTPFYAQSGGQTGDTGEITGVGKVLDTQKFHGLNLSQVEVGKQIKTGDVLNLKVSDARAEIARHHSATHLLHAALRKILGTHVAQAGSNVEADRLRFDFSHPKALTSEELEMIEKFVNDAVASSAAAKTEIMDIEAAKNSGAIALFGEKYAENVRVLSLGNVSKELCGGTHVKNVSEIGAFFITKESGVSAGVRRIEAVCSRAALNLARGFRSELAEISNELKTNEPMVAIKKLKGEVRELKDKLKNIGDSHAIAFTSINDTKMGVAVVKSGDIKTMIDNYKNEFASLAILLLQVNDDKIAIAAGVKNAPIKAGEWVKMAAKILDGNGGGRDDFATAGGKNVPMIETAVKEAFEFAKEKLLNA.

Zn(2+) contacts are provided by His554, His558, Cys656, and His660.

Belongs to the class-II aminoacyl-tRNA synthetase family. The cofactor is Zn(2+).

Its subcellular location is the cytoplasm. It carries out the reaction tRNA(Ala) + L-alanine + ATP = L-alanyl-tRNA(Ala) + AMP + diphosphate. Its function is as follows. Catalyzes the attachment of alanine to tRNA(Ala) in a two-step reaction: alanine is first activated by ATP to form Ala-AMP and then transferred to the acceptor end of tRNA(Ala). Also edits incorrectly charged Ser-tRNA(Ala) and Gly-tRNA(Ala) via its editing domain. The chain is Alanine--tRNA ligase from Campylobacter curvus (strain 525.92).